Here is a 917-residue protein sequence, read N- to C-terminus: Intercellular adhesion molecule 5 (917 aa).

Residues 1–31 form the signal peptide; that stretch reads MPGPSPGLRRALLGLWAALGLGILGISAVAL. Residues 32-833 are Extracellular-facing; the sequence is EPFWADLQPR…RITVRVAGPW (802 aa). Ig-like C2-type domains follow at residues 48-130, 135-235, 242-329, 337-402, 408-486, 491-567, 572-651, 665-738, and 745-828; these read GGSL…PLPS, GENF…SLIA, DSER…LLTL, GKMV…SSEL, PRLD…VTLT, PALD…VAVT, PSFE…NRHG, PQMD…RTVT, and PVVA…ITVR. Residue asparagine 54 is glycosylated (N-linked (GlcNAc...) (high mannose) asparagine). Intrachain disulfides connect cysteine 55–cysteine 99 and cysteine 59–cysteine 103. 2 N-linked (GlcNAc...) asparagine glycosylation sites follow: asparagine 74 and asparagine 137. The cysteines at positions 142 and 198 are disulfide-linked. The residue at position 182 (threonine 182) is a Phosphothreonine. Residues asparagine 195, asparagine 214, asparagine 274, asparagine 316, asparagine 371, and asparagine 397 are each glycosylated (N-linked (GlcNAc...) asparagine). A disulfide bridge connects residues cysteine 249 and cysteine 302. Residues cysteine 344 and cysteine 383 are joined by a disulfide bond. 3 cysteine pairs are disulfide-bonded: cysteine 415/cysteine 470, cysteine 498/cysteine 551, and cysteine 579/cysteine 644. N-linked (GlcNAc...) asparagine glycans are attached at residues asparagine 582 and asparagine 645. A disulfide bridge connects residues cysteine 672 and cysteine 724. Residues asparagine 762, asparagine 793, and asparagine 794 are each glycosylated (N-linked (GlcNAc...) asparagine). The cysteines at positions 767 and 812 are disulfide-linked. Residues 834 to 854 form a helical membrane-spanning segment; the sequence is LWVAVGGAAGGAALLAAGAGL. Residues 855 to 917 are Cytoplasmic-facing; it reads AFYVQSTACK…EVFAIQLTSS (63 aa). Gly residues predominate over residues 884–893; it reads GAGGTPGAEG. Residues 884 to 908 form a disordered region; that stretch reads GAGGTPGAEGGAETPGTAESPADGE.

The protein belongs to the immunoglobulin superfamily. ICAM family. Glycosylation at Asn-54 is critical for functional folding. As to expression, expressed on neurons in the most rostral segment of the mammalian brain, the telencephalon.

The protein localises to the membrane. In terms of biological role, ICAM proteins are ligands for the leukocyte adhesion protein LFA-1 (integrin alpha-L/beta-2). The protein is Intercellular adhesion molecule 5 (Icam5) of Mus musculus (Mouse).